We begin with the raw amino-acid sequence, 61 residues long: Large ribosomal subunit protein uL30 (61 aa).

It belongs to the universal ribosomal protein uL30 family. In terms of assembly, part of the 50S ribosomal subunit.

The sequence is that of Large ribosomal subunit protein uL30 from Frankia alni (strain DSM 45986 / CECT 9034 / ACN14a).